Here is a 234-residue protein sequence, read N- to C-terminus: Uracil-DNA glycosylase (234 aa).

Asp-68 functions as the Proton acceptor in the catalytic mechanism.

This sequence belongs to the uracil-DNA glycosylase (UDG) superfamily. UNG family.

Its subcellular location is the cytoplasm. It carries out the reaction Hydrolyzes single-stranded DNA or mismatched double-stranded DNA and polynucleotides, releasing free uracil.. Excises uracil residues from the DNA which can arise as a result of misincorporation of dUMP residues by DNA polymerase or due to deamination of cytosine. In Ruegeria sp. (strain TM1040) (Silicibacter sp.), this protein is Uracil-DNA glycosylase.